Here is a 329-residue protein sequence, read N- to C-terminus: G-protein coupled bile acid receptor 1 (329 aa).

The Extracellular segment spans residues 1–18; the sequence is MMSHNTTELSAIPRGVQE. N-linked (GlcNAc...) asparagine glycosylation is present at asparagine 5. Residues 19–39 form a helical membrane-spanning segment; that stretch reads LSLVLASLIVIANLLLALGIV. Residues 40–49 are Cytoplasmic-facing; that stretch reads LDRHLRSPPA. A helical transmembrane segment spans residues 50-70; the sequence is GCFFLSLLLAGLLTGLALPTL. The Extracellular segment spans residues 71–84; sequence PGLWNRSHQGYWSC. Residue asparagine 75 is glycosylated (N-linked (GlcNAc...) asparagine). A disulfide bridge links cysteine 84 with cysteine 154. A helical membrane pass occupies residues 85-105; the sequence is LLLHLAPNFCFLSLLANLLLV. Over 106–124 the chain is Cytoplasmic; sequence HGERYMAVLQPLRPHGSVR. A helical transmembrane segment spans residues 125–145; that stretch reads LALFLTWISSLLFASLPALGW. At 146-157 the chain is on the extracellular side; that stretch reads NHWSPGANCSSQ. An N-linked (GlcNAc...) asparagine glycan is attached at asparagine 153. Residues 158–178 form a helical membrane-spanning segment; that stretch reads AIFPAPYLYLEVYGLLLPAVG. The Cytoplasmic portion of the chain corresponds to 179–229; that stretch reads ATALLSVRVLATAHHQLREIRRLERAVCRDAPSTLARALTWRQARAQAGAT. The helical transmembrane segment at 230–250 threads the bilayer; it reads LLFLLCWGPYVATLLLSVLAY. The Extracellular portion of the chain corresponds to 251–260; sequence ERRPPLGPVT. The helical transmembrane segment at 261-281 threads the bilayer; sequence LLSLISLGSASAAVVPVAMGL. The Cytoplasmic segment spans residues 282-329; that stretch reads GDQRYTAPWRTAAQRWLQVLRGRPKRANPGPSTAYHSSSQCSTDLDLN. The interval 306-329 is disordered; it reads KRANPGPSTAYHSSSQCSTDLDLN. The span at 311–329 shows a compositional bias: polar residues; that stretch reads GPSTAYHSSSQCSTDLDLN.

Belongs to the G-protein coupled receptor 1 family.

It is found in the cell membrane. Functionally, receptor for bile acid. Bile acid-binding induces its internalization, activation of extracellular signal-regulated kinase and intracellular cAMP production. May be involved in the suppression of macrophage functions by bile acids. Involved in bile acid promoted GLP1R secretion. This is G-protein coupled bile acid receptor 1 (Gpbar1) from Rattus norvegicus (Rat).